The primary structure comprises 722 residues: Exocyst complex component 3-like protein 4 (722 aa).

Disordered stretches follow at residues 1 to 53 (MPSP…LGSL) and 92 to 131 (NDGPATGHSQATPEVPSGVMNGVSQQASTGAASEELKPEA). The segment covering 34–46 (SRKEPNAHRKDGT) has biased composition (basic and acidic residues). S52 bears the Phosphoserine mark. Positions 113-122 (GVSQQASTGA) are enriched in polar residues. S513 carries the phosphoserine modification.

The protein belongs to the SEC6 family.

This is Exocyst complex component 3-like protein 4 (EXOC3L4) from Homo sapiens (Human).